Consider the following 515-residue polypeptide: Tripartite motif-containing protein 5 (515 aa).

Alanine 2 is modified (N-acetylalanine). The segment at 15-60 (CPICLELLTEPLSLPCGHSFCQACITANHKESMLYKEEERSCPVCR) adopts an RING-type zinc-finger fold. Phosphoserine is present on serine 87. The segment at 92–133 (QKVDHCARHGEKLLLFCQEDSKVICWLCERSQEHRGHHTFLM) adopts a B box-type zinc-finger fold. Zn(2+) contacts are provided by cysteine 97, histidine 100, cysteine 119, and histidine 125. The stretch at 137–225 (AQEYHVKLQT…LTKSETEMVQ (89 aa)) forms a coiled coil. Residues 187 to 200 (FEQLREILDWEESN) are required for interaction with GABARAP and for autophagy. The B30.2/SPRY domain maps to 283–515 (LKGMLDMFRE…VPMTLCSPSS (233 aa)).

Belongs to the TRIM/RBCC family. As to quaternary structure, can form homodimers and homotrimers. In addition to lower-order dimerization, also exhibits a higher-order multimerization and both low- and high-order multimerizations are essential for its restriction activity. Interacts with BTBD1 and BTBD2. Interacts with PSMC4, PSMC5, PSMD7 and HSPA8/HSC70. Interacts (via B30.2/SPRY domain) with HSPA1A/B. Interacts with PSMC2, MAP3K7/TAK1, TAB2 and TAB3. Interacts with SQSTM1. Interacts with TRIM6 and TRIM34. Interacts with ULK1 (phosphorylated form), GABARAP, GABARAPL1, GABARAPL2, MAP1LC3A, MAP1LC3C and BECN1. In terms of processing, degraded in a proteasome-independent fashion in the absence of viral infection but in a proteasome-dependent fashion following exposure to restriction sensitive virus. Post-translationally, autoubiquitinated in a RING finger- and UBE2D2-dependent manner. Monoubiquitinated by TRIM21. Deubiquitinated by Yersinia YopJ. Ubiquitination may not lead to proteasomal degradation.

Its subcellular location is the cytoplasm. It localises to the nucleus. The enzyme catalyses S-ubiquitinyl-[E2 ubiquitin-conjugating enzyme]-L-cysteine + [acceptor protein]-L-lysine = [E2 ubiquitin-conjugating enzyme]-L-cysteine + N(6)-ubiquitinyl-[acceptor protein]-L-lysine.. Its pathway is protein modification; protein ubiquitination. In terms of biological role, capsid-specific restriction factor that prevents infection from non-host-adapted retroviruses. Blocks viral replication early in the life cycle, after viral entry but before reverse transcription. In addition to acting as a capsid-specific restriction factor, also acts as a pattern recognition receptor that activates innate immune signaling in response to the retroviral capsid lattice. Binding to the viral capsid triggers its E3 ubiquitin ligase activity, and in concert with the heterodimeric ubiquitin conjugating enzyme complex UBE2V1-UBE2N (also known as UBC13-UEV1A complex) generates 'Lys-63'-linked polyubiquitin chains, which in turn are catalysts in the autophosphorylation of the MAP3K7/TAK1 complex (includes TAK1, TAB2, and TAB3). Activation of the MAP3K7/TAK1 complex by autophosphorylation results in the induction and expression of NF-kappa-B and MAPK-responsive inflammatory genes, thereby leading to an innate immune response in the infected cell. Plays a role in regulating autophagy through activation of autophagy regulator BECN1 by causing its dissociation from its inhibitors BCL2 and TAB2. The polypeptide is Tripartite motif-containing protein 5 (TRIM5) (Chlorocebus aethiops (Green monkey)).